A 158-amino-acid chain; its full sequence is 6,7-dimethyl-8-ribityllumazine synthase (158 aa).

5-amino-6-(D-ribitylamino)uracil is bound by residues F22, 56 to 58 (ALE), and 80 to 82 (VVI). Residue 85–86 (ET) participates in (2S)-2-hydroxy-3-oxobutyl phosphate binding. H88 functions as the Proton donor in the catalytic mechanism. A 5-amino-6-(D-ribitylamino)uracil-binding site is contributed by N113. R127 contributes to the (2S)-2-hydroxy-3-oxobutyl phosphate binding site.

Belongs to the DMRL synthase family.

It carries out the reaction (2S)-2-hydroxy-3-oxobutyl phosphate + 5-amino-6-(D-ribitylamino)uracil = 6,7-dimethyl-8-(1-D-ribityl)lumazine + phosphate + 2 H2O + H(+). The protein operates within cofactor biosynthesis; riboflavin biosynthesis; riboflavin from 2-hydroxy-3-oxobutyl phosphate and 5-amino-6-(D-ribitylamino)uracil: step 1/2. In terms of biological role, catalyzes the formation of 6,7-dimethyl-8-ribityllumazine by condensation of 5-amino-6-(D-ribitylamino)uracil with 3,4-dihydroxy-2-butanone 4-phosphate. This is the penultimate step in the biosynthesis of riboflavin. The chain is 6,7-dimethyl-8-ribityllumazine synthase from Neisseria gonorrhoeae (strain ATCC 700825 / FA 1090).